A 549-amino-acid polypeptide reads, in one-letter code: Nectin-3 (549 aa).

Residues 1–57 form the signal peptide; sequence MARTLRPSPLCPGGGKAQLSSASLLGAGLLLQPPTPPPLLLLLFPLLLFSRLCGALA. The Extracellular portion of the chain corresponds to 58–404; that stretch reads GPIIVEPHVT…ATIKDDTIAT (347 aa). The region spanning 59 to 165 is the Ig-like V-type domain; that stretch reads PIIVEPHVTA…GNAQSSTTVT (107 aa). N-linked (GlcNAc...) asparagine glycans are attached at residues Asn-73, Asn-83, Asn-125, Asn-186, Asn-222, and Asn-331. A disulfide bond links Cys-78 and Cys-148. Ig-like C2-type domains follow at residues 170 to 258 and 269 to 354; these read PTVS…KDIR and PEVS…KVIY. Cystine bridges form between Cys-193-Cys-246 and Cys-291-Cys-338. A helical membrane pass occupies residues 405–425; it reads IIASVVGGALFIVLVSVLAGI. The Cytoplasmic portion of the chain corresponds to 426–549; that stretch reads FCYRRRRTFR…SVISRREWYV (124 aa).

Belongs to the nectin family. Cis- and trans-homodimer. Can form trans-heterodimers with NECTIN1, NECTIN2, PVR, IGSF4B/Necl-1 and with IGSF4. Interaction between NECTIN1 and NECTIN3 on the pre- and postsynaptic sites, respectively, initiates the formation of puncta adherentia junctions between axons and dendrites. Interacts (via Cytoplasmic domain) with AFDN, providing a connection with the actin cytoskeleton. Binds with low affinity to TIGIT. As to quaternary structure, (Microbial infection) Interacts with C.difficile toxin TcdB, suggesting that it may contribute to TcdB toxin entry into cells. It was however shown that NECTIN3/PVRL3 does not act as a major receptor for TcdB. Predominantly expressed in testis and placenta as well as in many cell lines, including epithelial cell lines.

It is found in the cell membrane. The protein resides in the postsynaptic cell membrane. The protein localises to the cell junction. Its subcellular location is the adherens junction. Functionally, cell adhesion molecule that promotes cell-cell adhesion through heterophilic trans-interactions with nectins-like or other nectins, such as trans-interaction with NECTIN2 at Sertoli-spermatid junctions. Trans-interaction with PVR induces activation of CDC42 and RAC small G proteins through common signaling molecules such as SRC and RAP1. Induces endocytosis-mediated down-regulation of PVR from the cell surface, resulting in reduction of cell movement and proliferation. Involved in axon guidance by promoting contacts between the commissural axons and the floor plate cells. Also involved in the formation of cell-cell junctions, including adherens junctions and synapses. Promotes formation of checkerboard-like cellular pattern of hair cells and supporting cells in the auditory epithelium via heterophilic interaction with NECTIN1: NECTIN1 is present in the membrane of hair cells and associates with NECTIN3 on supporting cells, thereby mediating heterotypic adhesion between these two cell types. Plays a role in the morphology of the ciliary body. In Homo sapiens (Human), this protein is Nectin-3.